A 300-amino-acid polypeptide reads, in one-letter code: Meiosis-specific cyclin crs1 (300 aa).

Residues 61 to 183 enclose the Cyclin N-terminal domain; sequence IIEQEKKGLT…VLALLNFDIY (123 aa).

The protein belongs to the cyclin family. Cyclin AB subfamily.

It localises to the cytoplasm. The protein resides in the nucleus. Functionally, has a role in meiotic chromosome segregation. The chain is Meiosis-specific cyclin crs1 (crs1) from Schizosaccharomyces pombe (strain 972 / ATCC 24843) (Fission yeast).